A 214-amino-acid polypeptide reads, in one-letter code: MRRLIDKTLVVASHNAGKIREIRDLIGPLGFEAKSAADLNFVEPDETGTTFEENATIKALASAKASGLPALSDDSGLAVDALGGAPGVYTANWAEREDGSRDFQMAMEKVEEALRAKGAVKPESRTARFVSVLCLAWPDGHVELFRGEVEGYVVWPPRGTSGFGYDPVFQPKGYDTTFGEMSAEEKHGWKPGDSEALSHRARAFKLFAETCLGA.

13 to 18 (SHNAGK) provides a ligand contact to substrate. Residues Asp-45 and Asp-74 each coordinate Mg(2+). The active-site Proton acceptor is the Asp-74. Residues Ser-75, 163-166 (FGYD), Lys-186, and 199-200 (HR) each bind substrate.

This sequence belongs to the HAM1 NTPase family. As to quaternary structure, homodimer. It depends on Mg(2+) as a cofactor.

It carries out the reaction XTP + H2O = XMP + diphosphate + H(+). It catalyses the reaction dITP + H2O = dIMP + diphosphate + H(+). The catalysed reaction is ITP + H2O = IMP + diphosphate + H(+). Its function is as follows. Pyrophosphatase that catalyzes the hydrolysis of nucleoside triphosphates to their monophosphate derivatives, with a high preference for the non-canonical purine nucleotides XTP (xanthosine triphosphate), dITP (deoxyinosine triphosphate) and ITP. Seems to function as a house-cleaning enzyme that removes non-canonical purine nucleotides from the nucleotide pool, thus preventing their incorporation into DNA/RNA and avoiding chromosomal lesions. The sequence is that of dITP/XTP pyrophosphatase from Rhizobium meliloti (strain 1021) (Ensifer meliloti).